The primary structure comprises 591 residues: Probable LRR receptor-like serine/threonine-protein kinase At1g69990 (591 aa).

Positions 1 to 18 (MKTISIFFVIILMSSSHA) are cleaved as a signal peptide. At 19–218 (EDDVLCLKGF…GKNLTIIVTA (200 aa)) the chain is on the extracellular side. Asn-46 is a glycosylation site (N-linked (GlcNAc...) asparagine). LRR repeat units follow at residues 66–88 (RILSLQLQSMQLSGQIPESLKLC), 90–111 (SLQSLDLSFNDFSGLIPSQICS), 115–137 (YLVTLDLSGNKLSGSIPSQIVDC), 139–162 (FLNSLALNQNKLTGSIPSELTRLN), and 163–185 (RLQRLSLADNDLSGSIPSELSHY). N-linked (GlcNAc...) asparagine glycosylation is present at Asn-211. The helical transmembrane segment at 219–239 (GVIGAVGSLCVGFGMFWWFFI) threads the bilayer. The Cytoplasmic portion of the chain corresponds to 240–591 (RDRRKMNNYG…LIFNKQEHLK (352 aa)). Thr-292 carries the phosphothreonine modification. The region spanning 295–573 (FDSGNIVVSS…KNLGDQHGFF (279 aa)) is the Protein kinase domain. ATP is bound by residues 301–309 (VVSSRSGVS) and Lys-323. Ser-378 carries the phosphoserine modification. Phosphothreonine is present on Thr-389. Residue Tyr-463 is modified to Phosphotyrosine. Residue Ser-465 is modified to Phosphoserine. Thr-466 bears the Phosphothreonine mark. Position 470 is a phosphoserine (Ser-470).

The protein belongs to the protein kinase superfamily. Ser/Thr protein kinase family.

Its subcellular location is the membrane. It carries out the reaction L-seryl-[protein] + ATP = O-phospho-L-seryl-[protein] + ADP + H(+). The enzyme catalyses L-threonyl-[protein] + ATP = O-phospho-L-threonyl-[protein] + ADP + H(+). This chain is Probable LRR receptor-like serine/threonine-protein kinase At1g69990, found in Arabidopsis thaliana (Mouse-ear cress).